Here is a 687-residue protein sequence, read N- to C-terminus: Protein Smaug homolog 2 (687 aa).

Over residues 160-172 (TRPEPSYHSRQGS) the composition is skewed to basic and acidic residues. The tract at residues 160–301 (TRPEPSYHSR…NTFQEDGSGM (142 aa)) is disordered. The residue at position 172 (Ser172) is a Phosphoserine. 2 stretches are compositionally biased toward low complexity: residues 175-190 (WGGP…GPGW) and 200-211 (HVPFHPSSSVPP). The segment covering 215 to 224 (SIGSNANTGL) has biased composition (polar residues). Ser271, Ser278, Ser279, and Ser281 each carry phosphoserine. Residues 278-290 (SSGSEQTEEQGSS) are compositionally biased toward low complexity. The region spanning 299 to 372 (SGMKDVPSWL…LKSLEKDVLE (74 aa)) is the SAM domain. A Phosphothreonine modification is found at Thr400. The disordered stretch occupies residues 402–464 (TAKDEGRGEP…APAPVADGDI (63 aa)). Over residues 424-435 (GSDKGTEAKDPP) the composition is skewed to basic and acidic residues. Low complexity predominate over residues 448–461 (PSDSSEPAPAPVAD). Phosphoserine occurs at positions 548, 550, 556, 585, and 593. Residue Arg595 is modified to Asymmetric dimethylarginine. The tract at residues 600 to 636 (SPSLGGQGRQNLWFANPGGSNSMPSQSRSSVQRTHSL) is disordered. Residues 617-636 (GGSNSMPSQSRSSVQRTHSL) are compositionally biased toward polar residues. At Ser621 the chain carries Phosphoserine.

It belongs to the SMAUG family.

The protein localises to the cytoplasm. Its subcellular location is the nucleus. Has transcriptional repressor activity. Overexpression inhibits the transcriptional activities of AP-1, p53/TP53 and CDKN1A. The protein is Protein Smaug homolog 2 (Samd4b) of Mus musculus (Mouse).